Reading from the N-terminus, the 451-residue chain is GABA transporter 1 (451 aa).

The next 11 membrane-spanning stretches (helical) occupy residues 35 to 55, 57 to 77, 115 to 135, 153 to 173, 182 to 202, 222 to 242, 262 to 282, 308 to 328, 356 to 376, 382 to 402, and 411 to 431; these read CGFHLTTSIVAPALLSLPYAF, FLGWAAGISCLVGGAAVTFYS, VGPIQMAVCYGVVIANALLGG, LFEFVIIFGCLLLVLAQFPSF, LSLLLCLLYSASAAAASIYIG, VFGIFNAMAIIATTYGNGIIP, MCYLVVIMTFFTVAITGYWAF, FIFLVNLFTVLQLSAVAVVYL, LVVRSLFVVMATIVAAMLPFF, LLGAFGFIPLDFVLPVVFFNF, and FIFWINTVIAVVFSCLGVIAM.

This sequence belongs to the amino acid/polyamine transporter 2 family. Amino acid/auxin permease (AAAP) (TC 2.A.18.2) subfamily. As to expression, highly expressed in flowers and at lower levels in roots, leaves and stems.

It localises to the cell membrane. Functionally, high affinity gamma-aminobutyric acid (GABA) transporter probably involved in GABA uptake into cells. When expressed in a heterologous system (Xenopus oocytes), imports GABA, butylamine, beta- and L-Alanine, 5-aminovaleric acid, 6-aminocaproic acid and 8-aminocaprylic acid, but does not mediate the transport of proline or glycine betaine. This Arabidopsis thaliana (Mouse-ear cress) protein is GABA transporter 1 (GAT1).